The sequence spans 613 residues: MADGVFQGAIGIDLGTTYSCVATYESSVEIIANEQGNRVTPSFVAFTPEERLIGDAAKNQAALNPKNTVFDAKRLIGRRFDEESVQNDMKTWPFKVVDVEGAPVIEVEYLGETKQFSPQEISSMVLTKMKEIAEAKIGKKVEKAVITVPAYFNDAQRQATKDAGAISGLNVLRIINEPTAAAIAYGLGAGKSDKERHVLIFDLGGGTFDVSLLHIAGGVYTVKSTSGNTHLGGQDFDTNLLEHFKSDFKKKTGLDISNDARALRRLRTAAERAKRTLSSVTQTTVEVDSLFDGEDFEASLTRARFEDLNAALFKSTLEPVEQVLKDAKISKSQIDEVVLVGGSTRIPKVQKLLSDFFDGKQLEKSINPDEAVAYGAAVQGAILTGQSTSDETKDLLLLDVAPLSLGVGMQGDIFGVVVPRNTTVPTIKRRTFTTVGDNQTTVQFPVYQGERVNCKENTLLGEFDLKNIPPMQAGEPVLEAIFEVDANGILKVTAVEKSTGKSANITISNAVGRLSSEDIEKMVNQAEEFKAADEAFAKRHEAKQRLESYVASIEQTVTDPVLSSKLKRGSKTKIEAALADALAALQIEDGSTEEYRKAEVGLKRVVTKAMSSR.

Residues 1 to 391 (MADGVFQGAI…ILTGQSTSDE (391 aa)) form a nucleotide binding domain (NBD) region. Residues 16 to 18 (TTY), lysine 73, 205 to 207 (GGT), 271 to 278 (ERAKRTLS), and glycine 342 each bind ATP. An inter-domain linker region spans residues 392 to 402 (TKDLLLLDVAP). The substrate binding domain (SBD) stretch occupies residues 403-613 (LSLGVGMQGD…RVVTKAMSSR (211 aa)). Residues 516–612 (SEDIEKMVNQ…KRVVTKAMSS (97 aa)) form a lid domain (SBDalpha) region. The Nuclear export signal motif lies at 574 to 582 (IEAALADAL).

It belongs to the heat shock protein 70 family. Ssb-type Hsp70 subfamily. Binds to ribosomes. Binds close to the ribosomal tunnel exit via contacts with both ribosomal proteins and rRNA. Directly interacts with nascent polypeptides. This interaction is dependent on the ribosome-associated complex (RAC). Interacts with SSE1. Interacts with FES1.

The protein localises to the cytoplasm. It catalyses the reaction ATP + H2O = ADP + phosphate + H(+). Its function is as follows. Ribosome-bound, Hsp70-type chaperone that assists in the cotranslational folding of newly synthesized proteins in the cytosol. Stimulates folding by interacting with nascent chains, binding to short, largely hydrophobic sequences exposed by unfolded proteins, thereby stabilizing longer, more slowly translated, and aggregation-prone nascent polypeptides and domains that cannot fold stably until fully synthesized. The Hsp70-protein substrate interaction depends on ATP-binding and on allosteric regulation between the NBD and the SBD. The ATP-bound state is characterized by a fast exchange rate of substrate (low affinity state), while in the ADP-bound state exchange is much slower (high affinity state). During the Hsp70 cycle, the chaperone switches between the ATP-bound state (open conformation) and the ADP-bound state (closed conformation) by major conformational rearrangements involving mainly the lid domain. Ssb cooperates with a specific Hsp40/Hsp70 co-chaperone termed the ribosome-associated complex (RAC), which stimulates the ATPase activity of the ribosome-associated pool of Ssbs and switches it to the high affinity substrate binding state. Hsp110 chaperone SSE1 and FES1 act as nucleotide exchange factors that cause substrate release. This chain is Ribosome-associated molecular chaperone SSB1 (SSB1), found in Nakaseomyces delphensis (Yeast).